The following is a 72-amino-acid chain: Large ribosomal subunit protein bL31 (72 aa).

The protein belongs to the bacterial ribosomal protein bL31 family. Type A subfamily. Part of the 50S ribosomal subunit.

Its function is as follows. Binds the 23S rRNA. This chain is Large ribosomal subunit protein bL31, found in Maricaulis maris (strain MCS10) (Caulobacter maris).